The following is a 219-amino-acid chain: Cell division protein B2 (219 aa).

Part of a cell division machinery. The polypeptide is Cell division protein B2 (Sulfolobus acidocaldarius (strain ATCC 33909 / DSM 639 / JCM 8929 / NBRC 15157 / NCIMB 11770)).